A 134-amino-acid polypeptide reads, in one-letter code: Holo-[acyl-carrier-protein] synthase (134 aa).

Residues Asp-8 and Glu-57 each coordinate Mg(2+).

Belongs to the P-Pant transferase superfamily. AcpS family. Requires Mg(2+) as cofactor.

It localises to the cytoplasm. It carries out the reaction apo-[ACP] + CoA = holo-[ACP] + adenosine 3',5'-bisphosphate + H(+). Functionally, transfers the 4'-phosphopantetheine moiety from coenzyme A to a Ser of acyl-carrier-protein. The polypeptide is Holo-[acyl-carrier-protein] synthase (Rhizobium rhizogenes (strain K84 / ATCC BAA-868) (Agrobacterium radiobacter)).